A 559-amino-acid polypeptide reads, in one-letter code: 3-phosphoinositide-dependent protein kinase 1 (559 aa).

The residue at position 9 (Tyr9) is a Phosphotyrosine; by SRC and INSR. The residue at position 25 (Ser25) is a Phosphoserine. Positions 25–83 are disordered; the sequence is SPSMVRSQTEPSSSPGIPSGVSRQGSTMDGTTAEARPSTNPLQQHPAQLPPQPRKKRPE. Positions 35–46 are enriched in low complexity; the sequence is PSSSPGIPSGVS. Positions 85 to 345 constitute a Protein kinase domain; it reads FKFGKILGEG…YGPLKAHPFF (261 aa). Residues 95 to 97 and Lys114 each bind ATP; that span reads SFS. The tract at residues 116–160 is PIF-pocket; that stretch reads LEKRHIIKENKVPYVTRERDVMSRLDHPFFVKLYFTFQDDEKLYF. Residues 163–165 and Glu169 contribute to the ATP site; that span reads SYA. The Proton acceptor role is filled by Asp208. Residues Glu212 and Asp226 each contribute to the ATP site. Position 244 is a phosphoserine (Ser244). The residue at position 307 (Lys307) is an N6-acetyllysine. Thr357 bears the Phosphothreonine; by MELK mark. A phosphotyrosine; by SRC and INSR mark is found at Tyr376 and Tyr379. Position 396 is a phosphoserine (Ser396). Ser397 carries the post-translational modification Phosphoserine; by MAP3K5. At Ser399 the chain carries Phosphoserine. Ser401 is subject to Phosphoserine; by MAP3K5. Ser413 is subject to Phosphoserine. One can recognise a PH domain in the interval 462-553; it reads KMGPVDKRKG…EVWRQQYQSS (92 aa). Residue Ser504 is modified to Phosphoserine; by PKC/PRKCQ. The residue at position 516 (Thr516) is a Phosphothreonine; by autocatalysis. Ser532 carries the post-translational modification Phosphoserine; by PKC/PRKCQ.

The protein belongs to the protein kinase superfamily. AGC Ser/Thr protein kinase family. PDPK1 subfamily. As to quaternary structure, homodimer in its autoinhibited state. Active as monomer. Interacts with NPRL2, PPARG, PAK1, PTK2B, GRB14, PKN1 (via C-terminus), STRAP and IKKB. The Tyr-9 phosphorylated form interacts with SRC, RASA1 and CRK (via their SH2 domains). Interacts with SGK3 in a phosphorylation-dependent manner. The tyrosine-phosphorylated form interacts with PTPN6. The Ser-244 phosphorylated form interacts with YWHAH and YWHAQ. Binds INSR in response to insulin. Interacts (via PH domain) with SMAD3, SMAD4 and SMAD7. Interacts with PKN2; the interaction stimulates PDPK1 autophosphorylation, its PI(3,4,5)P3-dependent kinase activity toward 'Ser-473' of AKT1 but also activates its kinase activity toward PRKCD and PRKCZ. Post-translationally, phosphorylation on Ser-244 in the activation loop is required for full activity. PDPK1 itself can autophosphorylate Ser-244, leading to its own activation. Autophosphorylation is inhibited by the apoptotic C-terminus cleavage product of PKN2. Tyr-9 phosphorylation is critical for stabilization of both PDPK1 and the PDPK1/SRC complex via HSP90-mediated protection of PDPK1 degradation. Angiotensin II stimulates the tyrosine phosphorylation of PDPK1 in vascular smooth muscle in a calcium- and SRC-dependent manner. Phosphorylated on Tyr-9, Tyr-376 and Tyr-379 by INSR in response to insulin. Palmitate negatively regulates autophosphorylation at Ser-244 and palmitate-induced phosphorylation at Ser-532 and Ser-504 by PKC/PRKCQ negatively regulates its ability to phosphorylate PKB/AKT1. Phosphorylation at Thr-357 by MELK partially inhibits kinase activity, the inhibition is cooperatively enhanced by phosphorylation at Ser-397 and Ser-401 by MAP3K5. Monoubiquitinated in the kinase domain, deubiquitinated by USP4.

It localises to the cytoplasm. The protein resides in the nucleus. It is found in the cell membrane. Its subcellular location is the cell junction. The protein localises to the focal adhesion. It catalyses the reaction L-seryl-[protein] + ATP = O-phospho-L-seryl-[protein] + ADP + H(+). The catalysed reaction is L-threonyl-[protein] + ATP = O-phospho-L-threonyl-[protein] + ADP + H(+). Its activity is regulated as follows. Homodimerization regulates its activity by maintaining the kinase in an autoinhibitory conformation. NPRL2 down-regulates its activity by interfering with tyrosine phosphorylation at the Tyr-9, Tyr-376 and Tyr-379 residues. The 14-3-3 protein YWHAQ acts as a negative regulator by association with the residues surrounding the Ser-244 residue. STRAP positively regulates its activity by enhancing its autophosphorylation and by stimulating its dissociation from YWHAQ. SMAD2, SMAD3, SMAD4 and SMAD7 also positively regulate its activity by stimulating its dissociation from YWHAQ. Activated by phosphorylation on Tyr-9, Tyr-376 and Tyr-379 by INSR in response to insulin. Serine/threonine kinase which acts as a master kinase, phosphorylating and activating a subgroup of the AGC family of protein kinases. Its targets include: protein kinase B (PKB/AKT1, PKB/AKT2, PKB/AKT3), p70 ribosomal protein S6 kinase (RPS6KB1), p90 ribosomal protein S6 kinase (RPS6KA1, RPS6KA2 and RPS6KA3), cyclic AMP-dependent protein kinase (PRKACA), protein kinase C (PRKCD and PRKCZ), serum and glucocorticoid-inducible kinase (SGK1, SGK2 and SGK3), p21-activated kinase-1 (PAK1), TSSK3, protein kinase PKN (PKN1 and PKN2). Plays a central role in the transduction of signals from insulin by providing the activating phosphorylation to PKB/AKT1, thus propagating the signal to downstream targets controlling cell proliferation and survival, as well as glucose and amino acid uptake and storage. Negatively regulates the TGF-beta-induced signaling by: modulating the association of SMAD3 and SMAD7 with TGF-beta receptor, phosphorylating SMAD2, SMAD3, SMAD4 and SMAD7, preventing the nuclear translocation of SMAD3 and SMAD4 and the translocation of SMAD7 from the nucleus to the cytoplasm in response to TGF-beta. Activates PPARG transcriptional activity and promotes adipocyte differentiation. Activates the NF-kappa-B pathway via phosphorylation of IKKB. The tyrosine phosphorylated form is crucial for the regulation of focal adhesions by angiotensin II. Controls proliferation, survival, and growth of developing pancreatic cells. Participates in the regulation of Ca(2+) entry and Ca(2+)-activated K(+) channels of mast cells. Essential for the motility of vascular endothelial cells (ECs) and is involved in the regulation of their chemotaxis. Plays a critical role in cardiac homeostasis by serving as a dual effector for cell survival and beta-adrenergic response. Plays an important role during thymocyte development by regulating the expression of key nutrient receptors on the surface of pre-T cells and mediating Notch-induced cell growth and proliferative responses. Provides negative feedback inhibition to toll-like receptor-mediated NF-kappa-B activation in macrophages. The polypeptide is 3-phosphoinositide-dependent protein kinase 1 (Pdpk1) (Rattus norvegicus (Rat)).